A 960-amino-acid chain; its full sequence is MTTTVEDNREVLEAVLKEAVDLENVPIEEVFENLRCSKEGLTTQAADERLALFGHNKLEEKKESKFLKFLGFMWNPLSWVMEAAAIMAIALANGGGKPPDWQDFVGIITLLVINSTISFIEENNAGNAAAALMARLAPKAKVLRDGRWGEQDAAILVPGDIISIKLGDIVPADARLLEGDPLKIDQSALTGESLPVTKSSGDGVYSGSTCKQGEIEAVVIATGVHTFFGKAAHLVDTTNQIGHFQQVLTAIGNFCICSIAVGMLIEIVVMYPIQHRAYRPGIDNLLVLLIGGIPIAMPTVLSVTMAIGSHRLSQQGAITKRMTAIEEMAGMDVLCSDKTGTLTLNKLTVDKNLIEVFMKGVDADTVVLMAARASRLENQDAIDAAIVGMLADPKDARAGIQEVHFLPFNPTDKRTALTYIDNEGNTHRVSKGAPEQILNLAHNKSEIERRVHAVIDKFAERGLRSLAVAYQDVPEGRKDSAGGPWQFVGLMPLFDPPRHDSAETIRRALNLGVSVKMITGDQLAIGKETGRRLGMGTNMYPSSALLGQNKDESIVALPVDELIEKADGFAGVFPEHKYEIVKRLQARKHICGMTGDGVNDAPALKKADIGIAVADATDAARSASDIVLTEPGLSVIISAVLTSRAIFQRMKNYTIYAVSITIRIVLGFMLLALIWQFDFPPFMVLIIAILNDGTIMTISKDRVKPSPLPDSWKLSEIFATGVVFGSYMAMMTVIFFWVSYKTDFFPRTFGVATLEKTAHDDFRKLASAIYLQVSIISQALIFVTRSRSWSFVERPGIFLMIAFILAQLVATLIAVYANWSFAAIEGIGWGWAGVIWLYNIIFYIPLDFIKFFIRYALSGRAWDLVIEQRVAFTRQKDFGKEQRELQWAHAQRTLHGLQAPDTKMFTDRTHVSELNQMAEEAKRRAEIARLRELHTLKGHVESVVRLKGLDIETIQQAYTV.

The Cytoplasmic portion of the chain corresponds to 1 to 69 (MTTTVEDNRE…EKKESKFLKF (69 aa)). A helical membrane pass occupies residues 70 to 89 (LGFMWNPLSWVMEAAAIMAI). The Extracellular portion of the chain corresponds to 90–101 (ALANGGGKPPDW). The chain crosses the membrane as a helical span at residues 102–122 (QDFVGIITLLVINSTISFIEE). The Cytoplasmic segment spans residues 123 to 251 (NNAGNAAAAL…GHFQQVLTAI (129 aa)). The helical transmembrane segment at 252-272 (GNFCICSIAVGMLIEIVVMYP) threads the bilayer. At 273–281 (IQHRAYRPG) the chain is on the extracellular side. Residues 282-299 (IDNLLVLLIGGIPIAMPT) traverse the membrane as a helical segment. The Cytoplasmic segment spans residues 300-651 (VLSVTMAIGS…TSRAIFQRMK (352 aa)). Aspartate 337 (4-aspartylphosphate intermediate) is an active-site residue. Positions 596 and 600 each coordinate Mg(2+). The chain crosses the membrane as a helical span at residues 652-673 (NYTIYAVSITIRIVLGFMLLAL). Residues 674 to 678 (IWQFD) lie on the Extracellular side of the membrane. The helical transmembrane segment at 679–701 (FPPFMVLIIAILNDGTIMTISKD) threads the bilayer. At 702–717 (RVKPSPLPDSWKLSEI) the chain is on the cytoplasmic side. Residues 718–738 (FATGVVFGSYMAMMTVIFFWV) traverse the membrane as a helical segment. Residues 739–763 (SYKTDFFPRTFGVATLEKTAHDDFR) are Extracellular-facing. The helical transmembrane segment at 764-784 (KLASAIYLQVSIISQALIFVT) threads the bilayer. Residues 785–796 (RSRSWSFVERPG) lie on the Cytoplasmic side of the membrane. A helical transmembrane segment spans residues 797 to 817 (IFLMIAFILAQLVATLIAVYA). Residues 818 to 825 (NWSFAAIE) are Extracellular-facing. Residues 826 to 846 (GIGWGWAGVIWLYNIIFYIPL) form a helical membrane-spanning segment. Residues 847-960 (DFIKFFIRYA…IETIQQAYTV (114 aa)) lie on the Cytoplasmic side of the membrane. A Phosphothreonine modification is found at threonine 893. A Phosphoserine modification is found at serine 942. The interval 958 to 960 (YTV) is interaction with 14-3-3 proteins. The residue at position 959 (threonine 959) is a Phosphothreonine.

It belongs to the cation transport ATPase (P-type) (TC 3.A.3) family. Type IIIA subfamily. Binds to 14-3-3 proteins. The binding is induced by phosphorylation of Thr-959. Binding to 14-3-3 proteins activates the H(+)-ATPase. In terms of tissue distribution, expressed in guard cells and roots.

It is found in the cell membrane. It catalyses the reaction ATP + H2O + H(+)(in) = ADP + phosphate + 2 H(+)(out). The plasma membrane H(+) ATPase of plants and fungi generates a proton gradient that drives the active transport of nutrients by H(+)-symport. The resulting external acidification and/or internal alkinization may mediate growth responses. This Arabidopsis thaliana (Mouse-ear cress) protein is ATPase 4, plasma membrane-type (AHA4).